The sequence spans 159 residues: Small ribosomal subunit protein uS9 (159 aa).

The protein belongs to the universal ribosomal protein uS9 family.

This is Small ribosomal subunit protein uS9 from Rickettsia massiliae (strain Mtu5).